A 38-amino-acid polypeptide reads, in one-letter code: Large ribosomal subunit protein bL36c (38 aa).

Belongs to the bacterial ribosomal protein bL36 family.

The protein resides in the plastid. Its subcellular location is the apicoplast. The chain is Large ribosomal subunit protein bL36c (rpl36) from Theileria parva (East coast fever infection agent).